The chain runs to 491 residues: MNTQQLAKLRSIVPEMRRVRHIHFVGIGGAGMGGIAEVLANEGYQISGSDLAPNPVTQQLASLGATIYFNHRPENVRDASVVVVSSAISSDNPEIVAAHEARIPVIRRAEMLAELMRFRHGIAVAGTHGKTTTTAMVSSIYAEAGLDPTFVNGGLVKAAGVHARLGHSRYLIAEADESDASFLHLQPMVAIVTNIEADHMDTYQGDFENLKQTFINFLHNLPFYGRAVMCVDDPVIRELLPRVGRQTTTYGFSEDADVRVESYTQTGAQGHFTLARQDKELLHVTLNAPGRHNALNAAAAVAVATEEGIEDDDILRALESFQGTGRRFDFLGEYPLEPVNGKSGTAMLVDDYGHHPTEVDATIKAARAGWPDKNLVMLFQPHRYTRTRDLYDDFANVLCQVDALLMLDVYAAGEMPIPGADSRSLCRTIRGRGKVDPILVSDPAQAAEMLAQVLTGNDLILIQGAGNIGKIARNLSEIKLKPQTSGDEHHG.

126-132 contacts ATP; the sequence is GTHGKTT.

Belongs to the MurCDEF family.

It is found in the cytoplasm. It carries out the reaction UDP-N-acetyl-alpha-D-muramate + L-alanine + ATP = UDP-N-acetyl-alpha-D-muramoyl-L-alanine + ADP + phosphate + H(+). Its pathway is cell wall biogenesis; peptidoglycan biosynthesis. Cell wall formation. The protein is UDP-N-acetylmuramate--L-alanine ligase of Enterobacter sp. (strain 638).